The sequence spans 346 residues: MDLDLLDLNPRIIAAIKKAKLKSVKEVLHFSGPDLKRLTNLSSPEVWHLLRTASLHLRGSSILTALQLHQQKERFPTQHQRLSLGCPVLDALLRGGLPLDGITELAGRSSAGKTQLALQLCLAVQFPRQHGGLEAGAVYICTEDAFPHKRLQQLMAQQPRLRTDVPGELLQKLRFGSQIFIEHVADVDTLLECVNKKVPVLLSRGMARLVVIDSVAAPFRCEFDSQASAPRARHLQSLGATLRELSSAFQSPVLCINQVTEAMEEQGAAHGPLGFWDERVSPALGITWANQLLVRLLADRLREEEAALGCPARTLRVLSAPHLPPSSCSYTISAEGVRGTPGTQSH.

Position 1 is an N-acetylmethionine (methionine 1). An ATP-binding site is contributed by 107 to 114 (GRSSAGKT).

Belongs to the RecA family. RAD51 subfamily. In terms of assembly, interacts with RAD51C and RAD51. Part of the CX3 complex consisting of RAD51C and XRCC3; the complex has a ring-like structure arranged into a flat disk around a central channel; CX3 can interact with RAD51 in vitro. Forms a complex with FANCD2, BRCA2 and phosphorylated FANCG. Interacts with SWSAP1 and ZSWIM7; involved in homologous recombination repair. Interacts directly with PALB2 which may serve as a scaffold for a HR complex containing PALB2, BRCA2, RAD51C, RAD51 and XRCC3.

It is found in the nucleus. The protein localises to the cytoplasm. The protein resides in the perinuclear region. Its subcellular location is the mitochondrion. In terms of biological role, involved in the homologous recombination repair (HRR) pathway of double-stranded DNA, thought to repair chromosomal fragmentation, translocations and deletions. Part of the RAD51 paralog protein complex CX3 which acts in the BRCA1-BRCA2-dependent HR pathway. Upon DNA damage, CX3 acts downstream of RAD51 recruitment; the complex binds predominantly to the intersection of the four duplex arms of the Holliday junction (HJ) and to junctions of replication forks. Involved in HJ resolution and thus in processing HR intermediates late in the DNA repair process; the function may be linked to the CX3 complex and seems to involve GEN1 during mitotic cell cycle progression. Part of a PALB2-scaffolded HR complex containing BRCA2 and RAD51C and which is thought to play a role in DNA repair by HR. Plays a role in regulating mitochondrial DNA copy number under conditions of oxidative stress in the presence of RAD51 and RAD51C. The chain is DNA repair protein XRCC3 (XRCC3) from Homo sapiens (Human).